A 169-amino-acid chain; its full sequence is Protein GrpE (169 aa).

Residues 1–25 (MSEEKQNGQIQEETVENSENQNNEL) are disordered. Residues 7-23 (NGQIQEETVENSENQNN) show a composition bias toward polar residues.

This sequence belongs to the GrpE family. Homodimer.

The protein resides in the cytoplasm. Its function is as follows. Participates actively in the response to hyperosmotic and heat shock by preventing the aggregation of stress-denatured proteins, in association with DnaK and GrpE. It is the nucleotide exchange factor for DnaK and may function as a thermosensor. Unfolded proteins bind initially to DnaJ; upon interaction with the DnaJ-bound protein, DnaK hydrolyzes its bound ATP, resulting in the formation of a stable complex. GrpE releases ADP from DnaK; ATP binding to DnaK triggers the release of the substrate protein, thus completing the reaction cycle. Several rounds of ATP-dependent interactions between DnaJ, DnaK and GrpE are required for fully efficient folding. The chain is Protein GrpE from Campylobacter lari (strain RM2100 / D67 / ATCC BAA-1060).